The sequence spans 123 residues: Snaclec GPIB-binding protein subunit beta (123 aa).

3 disulfide bridges follow: C2–C13, C30–C119, and C96–C111. Residues 9-120 enclose the C-type lectin domain; it reads YGGHCYKLFK…CTRLQYFVCE (112 aa).

The protein belongs to the snaclec family. As to quaternary structure, heterodimer of subunits alpha and beta; disulfide-linked. In terms of tissue distribution, expressed by the venom gland.

The protein localises to the secreted. In terms of biological role, binds to platelet GPIb (subunit alpha) (GP1BA) and functions as a receptor blocker for vWF binding to GPIb. The platelet GPIb-binding site resides on the GPIB-BP subunit beta and not on the alpha subunit. At a final concentration of 104 nM totally abolishes vWF-dependent shear-induced platelet aggregation (SIPA) at a high shear stress, but had no effect on SIPA at a low shear stress. The protein is Snaclec GPIB-binding protein subunit beta of Bothrops jararaca (Jararaca).